A 338-amino-acid chain; its full sequence is Nicotinate-nucleotide--dimethylbenzimidazole phosphoribosyltransferase (338 aa).

E305 acts as the Proton acceptor in catalysis.

This sequence belongs to the CobT family.

The catalysed reaction is 5,6-dimethylbenzimidazole + nicotinate beta-D-ribonucleotide = alpha-ribazole 5'-phosphate + nicotinate + H(+). It participates in nucleoside biosynthesis; alpha-ribazole biosynthesis; alpha-ribazole from 5,6-dimethylbenzimidazole: step 1/2. Functionally, catalyzes the synthesis of alpha-ribazole-5'-phosphate from nicotinate mononucleotide (NAMN) and 5,6-dimethylbenzimidazole (DMB). The sequence is that of Nicotinate-nucleotide--dimethylbenzimidazole phosphoribosyltransferase from Rhizobium rhizogenes (strain K84 / ATCC BAA-868) (Agrobacterium radiobacter).